The sequence spans 275 residues: 2,3,4,5-tetrahydropyridine-2,6-dicarboxylate N-succinyltransferase (275 aa).

Belongs to the transferase hexapeptide repeat family.

It localises to the cytoplasm. It catalyses the reaction (S)-2,3,4,5-tetrahydrodipicolinate + succinyl-CoA + H2O = (S)-2-succinylamino-6-oxoheptanedioate + CoA. Its pathway is amino-acid biosynthesis; L-lysine biosynthesis via DAP pathway; LL-2,6-diaminopimelate from (S)-tetrahydrodipicolinate (succinylase route): step 1/3. This chain is 2,3,4,5-tetrahydropyridine-2,6-dicarboxylate N-succinyltransferase, found in Cupriavidus taiwanensis (strain DSM 17343 / BCRC 17206 / CCUG 44338 / CIP 107171 / LMG 19424 / R1) (Ralstonia taiwanensis (strain LMG 19424)).